The following is a 264-amino-acid chain: Thiamine pyrophosphokinase 1 (264 aa).

Residues Met1–Phe12 show a composition bias toward polar residues. Positions Met1 to Asp27 are disordered.

Belongs to the thiamine pyrophosphokinase family.

The protein localises to the cytoplasm. The protein resides in the cytosol. The enzyme catalyses thiamine + ATP = thiamine diphosphate + AMP + H(+). It functions in the pathway cofactor biosynthesis; thiamine diphosphate biosynthesis; thiamine diphosphate from thiamine: step 1/1. Functionally, catalyzes the phosphorylation of thiamine to thiamine pyrophosphate (TPP). TPP is an active cofactor for enzymes involved in glycolysis and energy production. Plant leaves require high levels of TPP for photosynthesis and carbohydrate metabolism. The protein is Thiamine pyrophosphokinase 1 (TPK1) of Oryza sativa subsp. japonica (Rice).